A 418-amino-acid polypeptide reads, in one-letter code: NADH-quinone oxidoreductase subunit D (418 aa).

This sequence belongs to the complex I 49 kDa subunit family. NDH-1 is composed of 14 different subunits. Subunits NuoB, C, D, E, F, and G constitute the peripheral sector of the complex.

Its subcellular location is the cell inner membrane. It catalyses the reaction a quinone + NADH + 5 H(+)(in) = a quinol + NAD(+) + 4 H(+)(out). NDH-1 shuttles electrons from NADH, via FMN and iron-sulfur (Fe-S) centers, to quinones in the respiratory chain. The immediate electron acceptor for the enzyme in this species is believed to be ubiquinone. Couples the redox reaction to proton translocation (for every two electrons transferred, four hydrogen ions are translocated across the cytoplasmic membrane), and thus conserves the redox energy in a proton gradient. This is NADH-quinone oxidoreductase subunit D from Neisseria meningitidis serogroup C (strain 053442).